Here is a 360-residue protein sequence, read N- to C-terminus: Peptide chain release factor 1 (360 aa).

An N5-methylglutamine modification is found at Gln235.

It belongs to the prokaryotic/mitochondrial release factor family. Post-translationally, methylated by PrmC. Methylation increases the termination efficiency of RF1.

The protein resides in the cytoplasm. Peptide chain release factor 1 directs the termination of translation in response to the peptide chain termination codons UAG and UAA. In Bordetella parapertussis (strain 12822 / ATCC BAA-587 / NCTC 13253), this protein is Peptide chain release factor 1.